We begin with the raw amino-acid sequence, 396 residues long: Elongation factor Tu (396 aa).

One can recognise a tr-type G domain in the interval 10-205; sequence KSHANIGTIG…AVDEYIPTPE (196 aa). The tract at residues 19–26 is G1; sequence GHVDHGKT. Residue 19 to 26 participates in GTP binding; sequence GHVDHGKT. A Mg(2+)-binding site is contributed by Thr-26. The G2 stretch occupies residues 61–65; the sequence is GITIS. The interval 82–85 is G3; sequence DCPG. Residues 82 to 86 and 137 to 140 each bind GTP; these read DCPGH and NKCD. A G4 region spans residues 137-140; that stretch reads NKCD. The interval 175-177 is G5; it reads SAL.

It belongs to the TRAFAC class translation factor GTPase superfamily. Classic translation factor GTPase family. EF-Tu/EF-1A subfamily. In terms of assembly, monomer.

It localises to the cytoplasm. It carries out the reaction GTP + H2O = GDP + phosphate + H(+). In terms of biological role, GTP hydrolase that promotes the GTP-dependent binding of aminoacyl-tRNA to the A-site of ribosomes during protein biosynthesis. This is Elongation factor Tu from Bacillus licheniformis (strain ATCC 14580 / DSM 13 / JCM 2505 / CCUG 7422 / NBRC 12200 / NCIMB 9375 / NCTC 10341 / NRRL NRS-1264 / Gibson 46).